The chain runs to 567 residues: Arginine--tRNA ligase (567 aa).

Residues 121 to 131 (ANPNGPLHVGH) carry the 'HIGH' region motif.

The protein belongs to the class-I aminoacyl-tRNA synthetase family.

Its subcellular location is the cytoplasm. The enzyme catalyses tRNA(Arg) + L-arginine + ATP = L-arginyl-tRNA(Arg) + AMP + diphosphate. The sequence is that of Arginine--tRNA ligase from Methanococcoides burtonii (strain DSM 6242 / NBRC 107633 / OCM 468 / ACE-M).